We begin with the raw amino-acid sequence, 338 residues long: Taste receptor type 2 member 39 (338 aa).

Residues 1 to 30 (MLGRCFPPDTKEKQQLRMTKLCDPAESELS) are Extracellular-facing. A helical transmembrane segment spans residues 31–51 (PFLITLILAVLLAEYLIGIIA). Residues 52–74 (NGFIMAIHAAEWVQNKAVSTSGR) lie on the Cytoplasmic side of the membrane. The helical transmembrane segment at 75 to 95 (ILVFLSVSRIALQSLMMLEIT) threads the bilayer. Over 96 to 116 (ISSTSLSFYSEDAVYYAFKIS) the chain is Extracellular. The chain crosses the membrane as a helical span at residues 117–137 (FIFLNFCSLWFAAWLSFFYFV). Topologically, residues 138 to 156 (KIANFSYPLFLKLRWRITG) are cytoplasmic. The helical transmembrane segment at 157-177 (LIPWLLWLSVFISFSHSMFCI) threads the bilayer. The Extracellular portion of the chain corresponds to 178 to 205 (NICTVYCNNSFPIHSSNSTKKTYLSEIN). Asn185 and Asn194 each carry an N-linked (GlcNAc...) asparagine glycan. The chain crosses the membrane as a helical span at residues 206-226 (VVGLAFFFNLGIVTPLIMFIL). At 227 to 262 (TATLLILSLKRHTLHMGSNATGSNDPSMEAHMGAIK) the chain is on the cytoplasmic side. Residues 263–283 (AISYFLILYIFNAVALFIYLS) form a helical membrane-spanning segment. Residues 284–291 (NMFDINSL) are Extracellular-facing. A helical membrane pass occupies residues 292 to 312 (WNNLCQIIMAAYPASHSILLI). The Cytoplasmic segment spans residues 313 to 338 (QDNPGLRRAWKRLQLRLHLYPKEWTL).

Belongs to the G-protein coupled receptor T2R family. In terms of tissue distribution, expressed in subsets of taste receptor cells of the tongue and exclusively in gustducin-positive cells.

Its subcellular location is the membrane. Receptor that may play a role in the perception of bitterness and is gustducin-linked. May play a role in sensing the chemical composition of the gastrointestinal content. The activity of this receptor may stimulate alpha gustducin, mediate PLC-beta-2 activation and lead to the gating of TRPM5. The chain is Taste receptor type 2 member 39 (TAS2R39) from Homo sapiens (Human).